Reading from the N-terminus, the 130-residue chain is Small ribosomal subunit protein uS9 (130 aa).

Belongs to the universal ribosomal protein uS9 family.

In Carboxydothermus hydrogenoformans (strain ATCC BAA-161 / DSM 6008 / Z-2901), this protein is Small ribosomal subunit protein uS9.